A 140-amino-acid polypeptide reads, in one-letter code: Large ribosomal subunit protein bL17 (140 aa).

The interval 119 to 140 (DTTAKGQDSGPVQVEEQENEEA) is disordered.

It belongs to the bacterial ribosomal protein bL17 family. As to quaternary structure, part of the 50S ribosomal subunit. Contacts protein L32.

This is Large ribosomal subunit protein bL17 from Zymomonas mobilis subsp. mobilis (strain ATCC 31821 / ZM4 / CP4).